The following is a 155-amino-acid chain: MLTLSGWITTQVPPSSRAAADAKAARTGTAEQAEDPAAGTDAADQHVQLSQAGRELAATMGVPVEEEDEDIPQELRPMVKMIRELKKKIEEKLRELQEAMRSSDPGAKEARVPELQKELQQLNSALQTATAAMASAIKEMGISDPALIMKVMGSR.

Positions 1–14 are enriched in polar residues; sequence MLTLSGWITTQVPP. A disordered region spans residues 1-44; sequence MLTLSGWITTQVPPSSRAAADAKAARTGTAEQAEDPAAGTDAAD. A compositionally biased stretch (low complexity) spans 17–30; it reads RAAADAKAARTGTA.

This is an uncharacterized protein from Pseudomonas aeruginosa (strain ATCC 15692 / DSM 22644 / CIP 104116 / JCM 14847 / LMG 12228 / 1C / PRS 101 / PAO1).